The sequence spans 159 residues: Phosphopantetheine adenylyltransferase (159 aa).

Position 9 (Thr-9) interacts with substrate. ATP-binding positions include 9-10 and His-17; that span reads TF. Substrate-binding residues include Lys-41, Leu-73, and Arg-87. Residues 88–90, Glu-98, and 123–129 contribute to the ATP site; these read GLR and YAFLSST.

It belongs to the bacterial CoaD family. Homohexamer. The cofactor is Mg(2+).

The protein resides in the cytoplasm. The enzyme catalyses (R)-4'-phosphopantetheine + ATP + H(+) = 3'-dephospho-CoA + diphosphate. The protein operates within cofactor biosynthesis; coenzyme A biosynthesis; CoA from (R)-pantothenate: step 4/5. Reversibly transfers an adenylyl group from ATP to 4'-phosphopantetheine, yielding dephospho-CoA (dPCoA) and pyrophosphate. The polypeptide is Phosphopantetheine adenylyltransferase (Vibrio campbellii (strain ATCC BAA-1116)).